Here is a 330-residue protein sequence, read N- to C-terminus: PDZ and LIM domain protein 4 (330 aa).

The PDZ domain maps to 1-84 (MPHSVTLRGP…HLTLSVSRPE (84 aa)). The segment at 104–180 (IDPEIQDGSP…DPARGLPRSR (77 aa)) is disordered. The segment covering 111–121 (GSPTTSRRPSG) has biased composition (low complexity). A phosphoserine mark is found at Ser112, Ser116, Ser120, and Ser135. Positions 148–163 (NGSSEATLPAQMSTLH) are enriched in polar residues. One can recognise an LIM zinc-binding domain in the interval 253–312 (PECTRCGHGIVGTIVKARDKLYHPECFMCSDCGLNLKQRGYFFLDERLYCESHAKARVKP).

In terms of assembly, homodimer. Interacts with PTPN13. Interacts (via C-terminus only or via combined C-terminus and LIM domain, but not LIM domain only) with PTPN13 (via the second or fourth PDZ domains). Found in a complex with PTPN13 and TRIP6. Interacts (via PDZ domain) with ACTN1 and ACTN2 (via C-terminal SDL residues). Interacts (via PDZ domain) with TRIP6 (via the second LIM domain or via the third LIM domain plus C-terminus). Interacts (via LIM domain) with GRIA1 (via C-terminus); this interaction as well as the interaction with alpha-actinin is required for their colocalization in early endosomes. Interacts with PDLIM1. Forms (via LIM domain) a heterodimer with PDLIM3. Interacts directly with SRC (via kinase domain and to a lesser extent the SH2 domain). Isoform 2 interacts with NQO1. NQO1-stabilized isoform 2 heterodimerizes with isoform 1. Phosphorylated on tyrosine residue(s). Can be dephosphorylated by PTPN13. Found in brain.

It is found in the cytoplasm. The protein localises to the cytoskeleton. The protein resides in the nucleus. It localises to the perinuclear region. Its subcellular location is the cell projection. It is found in the lamellipodium. The protein localises to the dendritic spine. The protein resides in the early endosome membrane. It localises to the recycling endosome membrane. Its subcellular location is the synapse. It is found in the synaptosome. Functionally, suppresses SRC activation by recognizing and binding to active SRC and facilitating PTPN13-mediated dephosphorylation of SRC 'Tyr-419' leading to its inactivation. Inactivated SRC dissociates from this protein allowing the initiation of a new SRC inactivation cycle. Involved in reorganization of the actin cytoskeleton. In nonmuscle cells, binds to ACTN1 (alpha-actinin-1), increases the affinity of ACTN1 to F-actin (filamentous actin), and promotes formation of actin stress fibers. Involved in regulation of the synaptic AMPA receptor transport in dendritic spines of hippocampal pyramidal neurons directing the receptors toward an insertion at the postsynaptic membrane. Links endosomal surface-internalized GRIA1-containing AMPA receptors to the alpha-actinin/actin cytoskeleton. Increases AMPA receptor-mediated excitatory postsynaptic currents in neurons. Its function is as follows. Involved in reorganization of the actin cytoskeleton and in regulation of cell migration. In response to oxidative stress, binds to NQO1, which stabilizes it and protects it from ubiquitin-independent degradation by the core 20S proteasome. Stabilized protein is able to heterodimerize with isoform 1 changing the subcellular location of it from cytoskeleton and nuclei to cytosol, leading to loss of isoforms 1 ability to induce formation of actin stress fibers. Counteracts the effects produced by isoform 1 on organization of actin cytoskeleton and cell motility to fine-tune actin cytoskeleton rearrangement and to attenuate cell migration. This Homo sapiens (Human) protein is PDZ and LIM domain protein 4 (PDLIM4).